Reading from the N-terminus, the 153-residue chain is Vasotocin-neurophysin VT 1 (153 aa).

A signal peptide spans 1 to 19 (MPQCALLLSLLGLLALSSA). The cysteines at positions 20 and 25 are disulfide-linked. At Gly-28 the chain carries Glycine amide. Cystine bridges form between Cys-41/Cys-85, Cys-44/Cys-58, Cys-52/Cys-75, Cys-59/Cys-65, Cys-92/Cys-105, Cys-99/Cys-117, and Cys-106/Cys-111.

It belongs to the vasopressin/oxytocin family. In terms of processing, seven disulfide bonds are present in neurophysin.

It localises to the secreted. Its function is as follows. Vasotocin is probably an antidiuretic hormone. The polypeptide is Vasotocin-neurophysin VT 1 (Takifugu rubripes (Japanese pufferfish)).